The primary structure comprises 213 residues: StAR-related lipid transfer protein 5 (213 aa).

In terms of domain architecture, START spans 1-213 (MDPALAAQMS…LQKAVKQFHE (213 aa)).

Its function is as follows. May be involved in the intracellular transport of sterols or other lipids. May bind cholesterol or other sterols. In Pongo abelii (Sumatran orangutan), this protein is StAR-related lipid transfer protein 5 (STARD5).